Reading from the N-terminus, the 677-residue chain is Testis-specific Y-encoded-like protein 2 (677 aa).

The segment at 1-54 (MDRPDEGPPAKTPRLSSSEPRQRDLPPPPPPPLQRLPLPPPQQRPRPQEETEAA) is disordered. Lysine 11 participates in a covalent cross-link: Glycyl lysine isopeptide (Lys-Gly) (interchain with G-Cter in SUMO2). Phosphoserine is present on serine 18. A compositionally biased stretch (pro residues) spans 25 to 44 (LPPPPPPPLQRLPLPPPQQR). Glycyl lysine isopeptide (Lys-Gly) (interchain with G-Cter in SUMO2) cross-links involve residues lysine 158 and lysine 160. The segment at 175 to 202 (KESVRRRQRRRRRRRKQRKAKESRERSA) is disordered. Positions 178-193 (VRRRQRRRRRRRKQRK) are enriched in basic residues. The residue at position 333 (threonine 333) is a Phosphothreonine. Positions 469–658 (ANENLCDSEN…EVNSEDSDIQ (190 aa)) are disordered. Positions 484-493 (GYNTKITDNK) are enriched in polar residues. Residues 509–525 (EKNTYDSEDSNSEKADG) are compositionally biased toward basic and acidic residues. Polar residues predominate over residues 526-540 (DNTTLRDNQQVTNIQ). Composition is skewed to acidic residues over residues 543 to 581 (SDSDNGDEGSDDEDDDGNEGDNEGSDDDDDDNEGSDDDD) and 606 to 627 (DYEEEVELISEDSVEEEEETSE). The span at 639–650 (DERIYGEERSEV) shows a compositional bias: basic and acidic residues. A phosphoserine mark is found at serine 648, serine 652, and serine 655.

The protein belongs to the nucleosome assembly protein (NAP) family. As to quaternary structure, interacts with histones. Interacts with CASK. Part of a complex containing CASK, TBR1 and TSPYL2. In terms of processing, phosphorylation at Thr-333 impairs function on cell proliferation. Present at high levels in the pituitary gland and at moderate levels in adrenal gland, brain, testis and ovary. In brain, expressed both in mature neurons and progenitor cells (at protein level).

The protein resides in the nucleus. The protein localises to the cytoplasm. In terms of biological role, part of the CASK/TBR1/TSPYL2 transcriptional complex which modulates gene expression in response to neuronal synaptic activity, probably by facilitating nucleosome assembly. May inhibit cell proliferation by inducing p53-dependent CDKN1A expression. This chain is Testis-specific Y-encoded-like protein 2 (Tspyl2), found in Mus musculus (Mouse).